Reading from the N-terminus, the 118-residue chain is UPF0145 protein PTO0347 (118 aa).

The protein belongs to the UPF0145 family.

This is UPF0145 protein PTO0347 from Picrophilus torridus (strain ATCC 700027 / DSM 9790 / JCM 10055 / NBRC 100828 / KAW 2/3).